The sequence spans 499 residues: Putative protease Do-like 12, mitochondrial (499 aa).

Residues 1-24 (MLFRSCVGMVSRYSRALLPTITIS) constitute a mitochondrion transit peptide. The serine protease stretch occupies residues 94-259 (GGSGFAIAGK…IPTPIIRHFI (166 aa)). Residues His-110, Asp-144, and Ser-222 each act as charge relay system in the active site. Residues 272–356 (GSLVLSCQSM…DENILVKVLR (85 aa)) enclose the PDZ domain.

This sequence belongs to the peptidase S1C family.

It localises to the mitochondrion matrix. Its function is as follows. Putative serine protease. The polypeptide is Putative protease Do-like 12, mitochondrial (DEGP12) (Arabidopsis thaliana (Mouse-ear cress)).